We begin with the raw amino-acid sequence, 529 residues long: Probable E3 ubiquitin-protein ligase MGRN1 (529 aa).

The RING-type zinc-finger motif lies at 275–314 (ECVVCLSDLRDTLILPCRHLCLCNACADTLRYQANNCPIC). Disordered stretches follow at residues 341-362 (SPVL…IPPG) and 396-529 (EMGD…VEEC). Composition is skewed to polar residues over residues 449 to 463 (AQPQ…SPSE) and 477 to 487 (NSGSESRSLGV). Low complexity predominate over residues 501 to 511 (SSLSQSESDPS). A compositionally biased stretch (polar residues) spans 520–529 (ESWSTAVEEC).

In terms of processing, autoubiquitinated in vitro.

It carries out the reaction S-ubiquitinyl-[E2 ubiquitin-conjugating enzyme]-L-cysteine + [acceptor protein]-L-lysine = [E2 ubiquitin-conjugating enzyme]-L-cysteine + N(6)-ubiquitinyl-[acceptor protein]-L-lysine.. It participates in protein modification; protein ubiquitination. E3 ubiquitin-protein ligase. Also acts as a negative regulator of hedgehog signaling. The sequence is that of Probable E3 ubiquitin-protein ligase MGRN1 (mgrn1) from Danio rerio (Zebrafish).